Reading from the N-terminus, the 370-residue chain is uncharacterized protein (370 aa).

The protein belongs to the metallo-dependent hydrolases superfamily.

This is an uncharacterized protein from Mycobacterium bovis (strain ATCC BAA-935 / AF2122/97).